A 175-amino-acid chain; its full sequence is Large ribosomal subunit protein uL10 (175 aa).

It belongs to the universal ribosomal protein uL10 family. Part of the ribosomal stalk of the 50S ribosomal subunit. The N-terminus interacts with L11 and the large rRNA to form the base of the stalk. The C-terminus forms an elongated spine to which L12 dimers bind in a sequential fashion forming a multimeric L10(L12)X complex.

In terms of biological role, forms part of the ribosomal stalk, playing a central role in the interaction of the ribosome with GTP-bound translation factors. This Mycobacterium sp. (strain JLS) protein is Large ribosomal subunit protein uL10.